The following is a 71-amino-acid chain: UPF0352 protein Swoo_2786 (71 aa).

The protein belongs to the UPF0352 family.

The protein is UPF0352 protein Swoo_2786 of Shewanella woodyi (strain ATCC 51908 / MS32).